Here is a 339-residue protein sequence, read N- to C-terminus: MLEAQGSNHGCERQAPTASPASSAGHAVEVRPGLYLGGAAAVAEPGHLREAGITAVLTVDSEPAFPAGAGFEGLRSLFVPALDKPETDLLSHLDRCVAFIGQARSEGRAVLVHCHAGVSRSVAVVMAFIMKTDQLTFEKAYDILRTVKPEAKVNEGFEWQLKLYEAMGYEVDTSSAFYKQYRLQKVTEKCPKLWNLPQELFAVDPTTISQGLKDDILYKCRKCRRSLFRHSSILGHSEGSGPIAFAHKRTAPSSVLTTGSQAQCTSYFIEPVQWMESTLLGVMDGQLLCPKCSAKLGSFNWYGEQCSCGRWITPAFQIHKNRVDEMKMLPVLGSQTKKL.

An N-acetylmethionine modification is found at methionine 1. Positions 1–25 (MLEAQGSNHGCERQAPTASPASSAG) are disordered. The Tyrosine-protein phosphatase domain occupies 26–170 (HAVEVRPGLY…LKLYEAMGYE (145 aa)). Cysteine 114 (phosphocysteine intermediate) is an active-site residue. 115–120 (HAGVSR) provides a ligand contact to substrate. Residue serine 334 is modified to Phosphoserine.

Belongs to the protein-tyrosine phosphatase family. Non-receptor class dual specificity subfamily. As to quaternary structure, monomer. Zn(2+) serves as cofactor.

It localises to the nucleus. The protein localises to the cytoplasm. Its subcellular location is the cytosol. The enzyme catalyses O-phospho-L-tyrosyl-[protein] + H2O = L-tyrosyl-[protein] + phosphate. The catalysed reaction is O-phospho-L-seryl-[protein] + H2O = L-seryl-[protein] + phosphate. It carries out the reaction O-phospho-L-threonyl-[protein] + H2O = L-threonyl-[protein] + phosphate. Its function is as follows. Dual specificity phosphatase; can dephosphorylate both phosphotyrosine and phosphoserine or phosphothreonine residues. Can dephosphorylate glucokinase (in vitro). Has phosphatase activity with the synthetic substrate 6,8-difluoro-4-methylumbelliferyl phosphate and other in vitro substrates. This is Dual specificity protein phosphatase 12 (Dusp12) from Mus musculus (Mouse).